The following is a 179-amino-acid chain: Large ribosomal subunit protein uL5 (179 aa).

Belongs to the universal ribosomal protein uL5 family. As to quaternary structure, part of the 50S ribosomal subunit; part of the 5S rRNA/L5/L18/L25 subcomplex. Contacts the 5S rRNA and the P site tRNA. Forms a bridge to the 30S subunit in the 70S ribosome.

Its function is as follows. This is one of the proteins that bind and probably mediate the attachment of the 5S RNA into the large ribosomal subunit, where it forms part of the central protuberance. In the 70S ribosome it contacts protein S13 of the 30S subunit (bridge B1b), connecting the 2 subunits; this bridge is implicated in subunit movement. Contacts the P site tRNA; the 5S rRNA and some of its associated proteins might help stabilize positioning of ribosome-bound tRNAs. In Chromobacterium violaceum (strain ATCC 12472 / DSM 30191 / JCM 1249 / CCUG 213 / NBRC 12614 / NCIMB 9131 / NCTC 9757 / MK), this protein is Large ribosomal subunit protein uL5.